The following is a 311-amino-acid chain: Vomeronasal type-1 receptor 105 (311 aa).

The Extracellular portion of the chain corresponds to 1-17; that stretch reads MMNKNSRLYTDSNIRNT. Residues 18–38 form a helical membrane-spanning segment; the sequence is FFAEIGIGVSANSLLLLFNIF. The Cytoplasmic portion of the chain corresponds to 39 to 50; it reads KLICGQRSRLTD. A helical transmembrane segment spans residues 51 to 71; that stretch reads LPIGLLSLINLLMLLMTAFIA. Topologically, residues 72–94 are extracellular; the sequence is TDTFISWRGWDDIICKSLLYLYR. Cys86 and Cys173 form a disulfide bridge. Residues 95–115 form a helical membrane-spanning segment; sequence TFRGLSLCTSCLLSVLQAIIL. At 116 to 135 the chain is on the cytoplasmic side; sequence SPRSSCLAKFKHKPSHHISC. The helical transmembrane segment at 136–156 threads the bilayer; sequence AILSLSVLYMFISSHLLVSII. The Extracellular segment spans residues 157-188; it reads ATPNLTTNDFIHVTQWCSILPMSYLMQSMFST. Asn160 carries an N-linked (GlcNAc...) asparagine glycan. The helical transmembrane segment at 189 to 209 threads the bilayer; it reads LLAIRDVFLISLMVLSTWYMV. At 210-239 the chain is on the cytoplasmic side; it reads ALLCRHRKQTRHLQGTSLSPKASPEQRATR. Residues 240–260 form a helical membrane-spanning segment; that stretch reads SILMLMSLFVLMSVFDSIVCS. Topologically, residues 261–271 are extracellular; sequence SRTMYLNDPIS. Residues 272-292 traverse the membrane as a helical segment; that stretch reads YSYQLFMVHIYATVSPFVFIV. Residues 293-311 lie on the Cytoplasmic side of the membrane; sequence TEKHIVNSLRSMCVKVMNV.

The protein belongs to the G-protein coupled receptor 1 family. As to expression, expressed in 1-4% of neurons of the vomeronasal organ. Only one pheromone receptor gene may be expressed in a particular neuron. Not expressed in the main olfactory epithelium.

The protein localises to the cell membrane. In terms of biological role, putative pheromone receptor implicated in the regulation of social as well as reproductive behavior. The chain is Vomeronasal type-1 receptor 105 (Vom1r105) from Rattus norvegicus (Rat).